The primary structure comprises 595 residues: Beta-(1--&gt;2)glucan export ATP-binding/permease protein NdvA (595 aa).

The ABC transmembrane type-1 domain occupies serine 21–serine 301. The next 5 helical transmembrane spans lie at leucine 22–phenylalanine 42, isoleucine 55–leucine 75, alanine 128–isoleucine 148, phenylalanine 152–isoleucine 172, and threonine 248–glycine 268. Residues valine 335 to alanine 569 form the ABC transporter domain. Glycine 368–threonine 375 provides a ligand contact to ATP.

It belongs to the ABC transporter superfamily. Beta-(1--&gt;2)glucan exporter (TC 3.A.1.108.1) family. In terms of assembly, homodimer.

It localises to the cell inner membrane. It carries out the reaction [(1-&gt;2)-beta-D-glucosyl](n)(in) + ATP + H2O = [(1-&gt;2)-beta-D-glucosyl](n)(out) + ADP + phosphate + H(+). Involved in beta-(1--&gt;2)glucan export. Transmembrane domains (TMD) form a pore in the inner membrane and the ATP-binding domain (NBD) is responsible for energy generation. The protein is Beta-(1--&gt;2)glucan export ATP-binding/permease protein NdvA of Bartonella quintana (strain Toulouse) (Rochalimaea quintana).